A 492-amino-acid polypeptide reads, in one-letter code: Osmoregulated proline transporter OpuE (492 aa).

13 helical membrane-spanning segments follow: residues 3–23 (IEII…GWYA), 40–60 (LGPF…WMLM), 62–82 (VPGA…GLTI), 125–145 (IVSA…GMVS), 161–181 (GLFL…FLAV), 190–210 (AIMF…VGGV), 224–244 (LLDI…AWGL), 271–291 (IGMS…LIGV), 314–334 (ILFH…AIMS), 365–385 (LVMI…LLSL), 394–414 (LVGY…LLSL), 424–444 (ALAA…TGLA), and 449–469 (VYEI…VSMI).

This sequence belongs to the sodium:solute symporter (SSF) (TC 2.A.21) family.

Its subcellular location is the cell membrane. The enzyme catalyses L-proline(in) + Na(+)(in) = L-proline(out) + Na(+)(out). Its function is as follows. Catalyzes the uptake of extracellular proline under high-osmolarity growth conditions. Essential for the use of proline present in the environment as an osmoprotectant. This is Osmoregulated proline transporter OpuE from Bacillus subtilis (strain 168).